Reading from the N-terminus, the 1613-residue chain is NAD-specific glutamate dehydrogenase (1613 aa).

Lys849 is an active-site residue.

The protein belongs to the Glu/Leu/Phe/Val dehydrogenases family.

It carries out the reaction L-glutamate + NAD(+) + H2O = 2-oxoglutarate + NH4(+) + NADH + H(+). Its function is as follows. Involved in arginine catabolism by converting L-glutamate, into 2-oxoglutarate, which is then channeled into the tricarboxylic acid cycle. The polypeptide is NAD-specific glutamate dehydrogenase (Halomonas elongata (strain ATCC 33173 / DSM 2581 / NBRC 15536 / NCIMB 2198 / 1H9)).